Consider the following 524-residue polypeptide: Probable glycine dehydrogenase (decarboxylating) subunit 2 (524 aa).

The residue at position 296 (Lys-296) is an N6-(pyridoxal phosphate)lysine.

It belongs to the GcvP family. C-terminal subunit subfamily. The glycine cleavage system is composed of four proteins: P, T, L and H. In this organism, the P 'protein' is a heterodimer of two subunits. Requires pyridoxal 5'-phosphate as cofactor.

It carries out the reaction N(6)-[(R)-lipoyl]-L-lysyl-[glycine-cleavage complex H protein] + glycine + H(+) = N(6)-[(R)-S(8)-aminomethyldihydrolipoyl]-L-lysyl-[glycine-cleavage complex H protein] + CO2. In terms of biological role, the glycine cleavage system catalyzes the degradation of glycine. The P protein binds the alpha-amino group of glycine through its pyridoxal phosphate cofactor; CO(2) is released and the remaining methylamine moiety is then transferred to the lipoamide cofactor of the H protein. In Caulobacter vibrioides (strain ATCC 19089 / CIP 103742 / CB 15) (Caulobacter crescentus), this protein is Probable glycine dehydrogenase (decarboxylating) subunit 2.